Consider the following 554-residue polypeptide: Intraflagellar transport protein 56 (554 aa).

The interval 1–27 (MMLSRAKPAVGGESPHTDKRKKKGRKI) is disordered. Over residues 18–27 (DKRKKKGRKI) the composition is skewed to basic residues. 4 TPR repeats span residues 57-90 (DDTN…ENCN), 92-125 (EVWV…LQNR), 151-184 (KEDQ…NREY), and 468-501 (ANDC…EGKR).

It belongs to the IFT56 family. In terms of assembly, component of the IFT complex B. Interacts with IFT46; the interaction is direct. High expression detected in testis. Detected also retina, kidney, lung and brain tissue. The expression level is low in spleen. Expressed in the developing liver. Present in the airway epithelial cells and the testes (at protein level).

The protein resides in the cell projection. It localises to the cilium. Component of the intraflagellar transport (IFT) complex B required for transport of proteins in the motile cilium. Required for transport of specific ciliary cargo proteins related to motility, while it is neither required for IFT complex B assembly or motion nor for cilium assembly. Required for efficient coupling between the accumulation of GLI2 and GLI3 at the ciliary tips and their dissociation from the negative regulator SUFU. Plays a key role in maintaining the integrity of the IFT complex B and the proper ciliary localization of the IFT complex B components. Not required for IFT complex A ciliary localization or function. Essential for maintaining proper microtubule organization within the ciliary axoneme. The polypeptide is Intraflagellar transport protein 56 (Mus musculus (Mouse)).